The sequence spans 146 residues: Cyanate hydratase (146 aa).

Active-site residues include Arg-87, Glu-90, and Ser-113.

This sequence belongs to the cyanase family.

It carries out the reaction cyanate + hydrogencarbonate + 3 H(+) = NH4(+) + 2 CO2. Functionally, catalyzes the reaction of cyanate with bicarbonate to produce ammonia and carbon dioxide. This is Cyanate hydratase from Trichormus variabilis (strain ATCC 29413 / PCC 7937) (Anabaena variabilis).